The sequence spans 493 residues: MSNYFNTLSLREKLGQLGKCRFMKREEFNDGCNFIKDWNIVIVGCGAQGLNQGLNMRDSGLNISYTLRDAAISEKRQSWQWATENGFTVGSYAELIPQADLVLNLTPDKQHTSAVTAVMPLMKQGATLAYSHGFNIVEEGMQIRSDITVVMVAPKCPGTEVREEYKRGFGVPTLIAVHPENDPQGNGLAIAKAYASATGGDRAGVLESSFIAEVKSDLMGEQTILCGMLQTAAVLGHKQLIAQGMDAAYARKLLQYGLETTTEGLKHGGITNMMDRLSNPAKILAFDMAEELKVILRPLFQKHMDDIIEGRFSATMMADWANDDVNLLTWRAETAETSFEKSPECDTEISEQEYYDKGIFVVAMIKAGVELAFDAMVDSGIINASAYYESLHETPLIANCIARNMLHEMNVVISDTAEYGNYLFTHAAVPLLADYTASLTLEQLGEGLKESSNNVDNARLIEVNEAIRSHGVEVIGKELRGYMTDMKKIASAK.

A KARI N-terminal Rossmann domain is found at 17 to 208 (LGKCRFMKRE…GGDRAGVLES (192 aa)). Residues 45–48 (CGAQ), R68, R76, S78, and 108–110 (DKQ) each bind NADP(+). H132 is a catalytic residue. Residue G158 participates in NADP(+) binding. 2 consecutive KARI C-terminal knotted domains span residues 209-353 (SFIA…SEQE) and 354-486 (YYDK…MTDM). Mg(2+) is bound by residues D217, E221, E389, and E393. S414 provides a ligand contact to substrate.

This sequence belongs to the ketol-acid reductoisomerase family. It depends on Mg(2+) as a cofactor.

It catalyses the reaction (2R)-2,3-dihydroxy-3-methylbutanoate + NADP(+) = (2S)-2-acetolactate + NADPH + H(+). It carries out the reaction (2R,3R)-2,3-dihydroxy-3-methylpentanoate + NADP(+) = (S)-2-ethyl-2-hydroxy-3-oxobutanoate + NADPH + H(+). It functions in the pathway amino-acid biosynthesis; L-isoleucine biosynthesis; L-isoleucine from 2-oxobutanoate: step 2/4. Its pathway is amino-acid biosynthesis; L-valine biosynthesis; L-valine from pyruvate: step 2/4. Its function is as follows. Involved in the biosynthesis of branched-chain amino acids (BCAA). Catalyzes an alkyl-migration followed by a ketol-acid reduction of (S)-2-acetolactate (S2AL) to yield (R)-2,3-dihydroxy-isovalerate. In the isomerase reaction, S2AL is rearranged via a Mg-dependent methyl migration to produce 3-hydroxy-3-methyl-2-ketobutyrate (HMKB). In the reductase reaction, this 2-ketoacid undergoes a metal-dependent reduction by NADPH to yield (R)-2,3-dihydroxy-isovalerate. This chain is Ketol-acid reductoisomerase (NADP(+)), found in Colwellia psychrerythraea (strain 34H / ATCC BAA-681) (Vibrio psychroerythus).